The chain runs to 227 residues: PKHD-type hydroxylase Patl_2273 (227 aa).

Residues 78–178 (KIYPPKFNRY…RTASFFWIES (101 aa)) enclose the Fe2OG dioxygenase domain. H96, D98, and H159 together coordinate Fe cation. Residue R169 participates in 2-oxoglutarate binding.

Fe(2+) is required as a cofactor. Requires L-ascorbate as cofactor.

The sequence is that of PKHD-type hydroxylase Patl_2273 from Pseudoalteromonas atlantica (strain T6c / ATCC BAA-1087).